Here is a 475-residue protein sequence, read N- to C-terminus: Ribulose bisphosphate carboxylase large chain (475 aa).

A propeptide spanning residues 1-2 (MS) is cleaved from the precursor. Position 3 is an N-acetylproline (proline 3). Lysine 14 is subject to N6,N6,N6-trimethyllysine. Residues asparagine 123 and threonine 173 each contribute to the substrate site. The active-site Proton acceptor is lysine 175. Residue lysine 177 participates in substrate binding. Mg(2+)-binding residues include lysine 201, aspartate 203, and glutamate 204. Lysine 201 is modified (N6-carboxylysine). The Proton acceptor role is filled by histidine 294. Residues arginine 295, histidine 327, and serine 379 each contribute to the substrate site.

This sequence belongs to the RuBisCO large chain family. Type I subfamily. Heterohexadecamer of 8 large chains and 8 small chains; disulfide-linked. The disulfide link is formed within the large subunit homodimers. It depends on Mg(2+) as a cofactor. In terms of processing, the disulfide bond which can form in the large chain dimeric partners within the hexadecamer appears to be associated with oxidative stress and protein turnover.

Its subcellular location is the plastid. It is found in the chloroplast. The catalysed reaction is 2 (2R)-3-phosphoglycerate + 2 H(+) = D-ribulose 1,5-bisphosphate + CO2 + H2O. It carries out the reaction D-ribulose 1,5-bisphosphate + O2 = 2-phosphoglycolate + (2R)-3-phosphoglycerate + 2 H(+). Functionally, ruBisCO catalyzes two reactions: the carboxylation of D-ribulose 1,5-bisphosphate, the primary event in carbon dioxide fixation, as well as the oxidative fragmentation of the pentose substrate in the photorespiration process. Both reactions occur simultaneously and in competition at the same active site. This Vitis vinifera (Grape) protein is Ribulose bisphosphate carboxylase large chain.